Consider the following 281-residue polypeptide: Nucleotide-binding protein Noc_2797 (281 aa).

Residue Gly8–Ser15 participates in ATP binding. Asp58–Asn61 is a binding site for GTP.

It belongs to the RapZ-like family.

In terms of biological role, displays ATPase and GTPase activities. The sequence is that of Nucleotide-binding protein Noc_2797 from Nitrosococcus oceani (strain ATCC 19707 / BCRC 17464 / JCM 30415 / NCIMB 11848 / C-107).